Here is a 607-residue protein sequence, read N- to C-terminus: Threonine--tRNA ligase (607 aa).

Positions 200–502 (DHRKLGRELG…LIEEYAGDFP (303 aa)) are catalytic. 3 residues coordinate Zn(2+): Cys-299, His-350, and His-479.

Belongs to the class-II aminoacyl-tRNA synthetase family. In terms of assembly, homodimer. Zn(2+) is required as a cofactor.

Its subcellular location is the cytoplasm. It carries out the reaction tRNA(Thr) + L-threonine + ATP = L-threonyl-tRNA(Thr) + AMP + diphosphate + H(+). Its function is as follows. Catalyzes the attachment of threonine to tRNA(Thr) in a two-step reaction: L-threonine is first activated by ATP to form Thr-AMP and then transferred to the acceptor end of tRNA(Thr). Also edits incorrectly charged L-seryl-tRNA(Thr). This is Threonine--tRNA ligase from Synechococcus sp. (strain ATCC 27144 / PCC 6301 / SAUG 1402/1) (Anacystis nidulans).